The sequence spans 514 residues: 2,3-bisphosphoglycerate-independent phosphoglycerate mutase (514 aa).

2 residues coordinate Mn(2+): aspartate 13 and serine 63. Serine 63 acts as the Phosphoserine intermediate in catalysis. Residues histidine 124, arginine 154–aspartate 155, arginine 186, arginine 192, arginine 258–arginine 261, and lysine 332 each bind substrate. Mn(2+) is bound by residues aspartate 399, histidine 403, aspartate 440, histidine 441, and histidine 459.

The protein belongs to the BPG-independent phosphoglycerate mutase family. As to quaternary structure, monomer. Mn(2+) is required as a cofactor.

It catalyses the reaction (2R)-2-phosphoglycerate = (2R)-3-phosphoglycerate. Its pathway is carbohydrate degradation; glycolysis; pyruvate from D-glyceraldehyde 3-phosphate: step 3/5. Catalyzes the interconversion of 2-phosphoglycerate and 3-phosphoglycerate. This chain is 2,3-bisphosphoglycerate-independent phosphoglycerate mutase, found in Legionella pneumophila subsp. pneumophila (strain Philadelphia 1 / ATCC 33152 / DSM 7513).